The sequence spans 210 residues: Urease accessory protein UreE (210 aa).

The disordered stretch occupies residues 136-210 (PEGGAYAEPS…HGHSHAHDHK (75 aa)). 2 stretches are compositionally biased toward basic and acidic residues: residues 145–169 (SHAHGDHDHDHHGHDHHGHDHTSHD) and 178–196 (HDHDHGHAHDDHVHDEHCG). A compositionally biased stretch (basic residues) spans 197–210 (HDHHHGHSHAHDHK).

It belongs to the UreE family.

Its subcellular location is the cytoplasm. Its function is as follows. Involved in urease metallocenter assembly. Binds nickel. Probably functions as a nickel donor during metallocenter assembly. The protein is Urease accessory protein UreE of Bradyrhizobium sp. (strain ORS 278).